The sequence spans 119 residues: MIFAVGFGASLGAVARYALTSYGKKHWMQGTACPRPTLLINLTGAFFLGLAFALRLPASVYAFLGTGVLGGYTTFSTLNTEMVSLAENGQKHVLKHYLLASYLGGAVLLTCGYYLGSLL.

2 helical membrane passes run 1–21 (MIFAVGFGASLGAVARYALTS) and 44–64 (GAFFLGLAFALRLPASVYAFL). Na(+) is bound by residues Gly-70 and Thr-73. A helical transmembrane segment spans residues 98-118 (LLASYLGGAVLLTCGYYLGSL).

This sequence belongs to the fluoride channel Fluc/FEX (TC 1.A.43) family.

The protein localises to the cell membrane. It catalyses the reaction fluoride(in) = fluoride(out). Its activity is regulated as follows. Na(+) is not transported, but it plays an essential structural role and its presence is essential for fluoride channel function. Fluoride-specific ion channel. Important for reducing fluoride concentration in the cell, thus reducing its toxicity. This is Fluoride-specific ion channel FluC 2 from Lactobacillus delbrueckii subsp. bulgaricus (strain ATCC 11842 / DSM 20081 / BCRC 10696 / JCM 1002 / NBRC 13953 / NCIMB 11778 / NCTC 12712 / WDCM 00102 / Lb 14).